Here is a 348-residue protein sequence, read N- to C-terminus: Putative serine/threonine-protein phosphatase C26H8.05c (348 aa).

Positions 53, 55, 81, and 113 each coordinate Mn(2+). The active-site Proton donor is the His114. Mn(2+)-binding residues include His163 and His237. The tract at residues 259–282 (TNEEDSELDSDSASPVDDSPAPGD) is disordered. Residues 269 to 280 (DSASPVDDSPAP) are compositionally biased toward low complexity. Ser272 carries the phosphoserine modification. Leu348 is modified (leucine methyl ester).

It belongs to the PPP phosphatase family. PP-1 subfamily. It depends on Mn(2+) as a cofactor.

It is found in the cytoplasm. It localises to the nucleus. The catalysed reaction is O-phospho-L-seryl-[protein] + H2O = L-seryl-[protein] + phosphate. It catalyses the reaction O-phospho-L-threonyl-[protein] + H2O = L-threonyl-[protein] + phosphate. The sequence is that of Putative serine/threonine-protein phosphatase C26H8.05c from Schizosaccharomyces pombe (strain 972 / ATCC 24843) (Fission yeast).